A 436-amino-acid polypeptide reads, in one-letter code: Acetyl-CoA decarbonylase/synthase complex subunit delta (436 aa).

Belongs to the CdhD family. In terms of assembly, heterodimer of delta and gamma chains. The ACDS complex is made up of alpha, epsilon, beta, gamma and delta chains with a probable stoichiometry of (alpha(2)epsilon(2))(4)-beta(8)-(gamma(1)delta(1))(8).

Its pathway is one-carbon metabolism; methanogenesis from acetate. Its function is as follows. Part of a complex that catalyzes the reversible cleavage of acetyl-CoA, allowing growth on acetate as sole source of carbon and energy. Probably maintains the overall quaternary structure of the ACDS complex. This chain is Acetyl-CoA decarbonylase/synthase complex subunit delta, found in Methanosarcina mazei (strain ATCC BAA-159 / DSM 3647 / Goe1 / Go1 / JCM 11833 / OCM 88) (Methanosarcina frisia).